The primary structure comprises 782 residues: MFPPSGSTGLIPPSHFQARPLSTLPRMAPTWLSDIPLVQPPGHQDVSERRLDTQRPQVTMWERDVSSDRQEPGRRGRSWGLEGSQALSQQAEVIARQLQELRRLEEEVRLLRETSLQQKMRLEAQAMELEALARAEKAGRTEAEGLRAALAGAEVIRKNLEEGSQRELEEVQRLHQEQLSSLTQAHEEALSSLTSKAEGLEKSLSSLETRRAGEAKELAEAQREAELLRKQLSKTQEDLEAQVTLVENLRKYVGEQVPSEVHSQTWELERQKLLETMQHLQEDRDSLQATVELLQVRVQSLTHILALQEEELTRKVQPSDSLEPEFTRKCQFLLNRWREKVFALMVQLKAQELEHSDSVKQLKGQVASLQEQVTSQSQEQAILQRSLQDKAAEVEVERIGAKGLQLELSRAQEARHRWQQQTASAEEQLRLVVNAVSSSQIWLETTMAKVEEAAAQLPSLNNRLSYAVRKVHTIRGLIARKLALAQLRQESCPLPPPVADVSLELQQLREERNRLDAELQLSARLIQQEVGRAREQGEAERQQLSKVAQQLEQELQQTQESLASLGLQLEVARQGQQESTEEAASLRQELTQQQELYGQALQEKVAEVETQLREQLSDTERRLNEARREHAKAVVSLRQIQRRAAQEKERSQELRRLQEEARKEEGQRLARRLQELERDKNLMLATLQQEGLLSRYKQQRLLTVLPSLLDKKKSVVSSPRPPECSASAPIAAAVPTRESIKGSLSVLLDDLQGLSEAISKEEAVCQGDNLDRCSSSNPQMSS.

2 stretches are compositionally biased toward basic and acidic residues: residues 62 to 74 and 208 to 218; these read ERDV…EPGR and ETRRAGEAKEL. 2 disordered regions span residues 62-82 and 191-218; these read ERDV…WGLE and SSLT…AKEL. 3 coiled-coil regions span residues 82 to 314, 344 to 435, and 498 to 691; these read EGSQ…ELTR, LMVQ…VVNA, and VADV…QQEG.

Its subcellular location is the cytoplasm. It is found in the nucleus. Its function is as follows. May be a regulator of keratinocyte proliferation or differentiation. The chain is Coiled-coil alpha-helical rod protein 1 (CCHCR1) from Pongo pygmaeus (Bornean orangutan).